Consider the following 335-residue polypeptide: Acyl-CoA Delta(11) desaturase (335 aa).

Transmembrane regions (helical) follow at residues 39 to 59 (LLTFGYWHIAGLYGLYLCFTS), 64 to 84 (TIILALILNEMAILGITAGAH), and 98 to 118 (LQIILIIFNSLSFQNSAIHWI). The short motif at 84–89 (HRLWAH) is the Histidine box-1 element. A Histidine box-2 motif is present at residues 121 to 125 (HRMHH). 2 helical membrane passes run 182 to 202 (AIPFIGMICFVLPTIIPMYFW) and 213 to 235 (TMLRYVFSLNSIFLVNSAAHLYG). Residues 261 to 265 (HNYHH) carry the Histidine box-3 motif. The tract at residues 312–335 (MKRTGDGTDVSGQKYSCESSEVLQ) is disordered. Residues 321-335 (VSGQKYSCESSEVLQ) show a composition bias toward polar residues.

It belongs to the fatty acid desaturase type 1 family. Requires Fe cation as cofactor. As to expression, detected in pheromone gland.

It localises to the membrane. The catalysed reaction is an 11,12-saturated fatty acyl-CoA + 2 Fe(II)-[cytochrome b5] + O2 + 2 H(+) = an (11Z)-Delta(11)-fatty acyl-CoA + 2 Fe(III)-[cytochrome b5] + 2 H2O. Catalyzes the formation of Delta(11) fatty acyl precursors in the pheromone gland, with a preference for myristic acid. The chain is Acyl-CoA Delta(11) desaturase from Choristoneura rosaceana (Oblique banded leafroller).